The sequence spans 600 residues: Glutamine--fructose-6-phosphate aminotransferase [isomerizing] (600 aa).

Cys-2 acts as the Nucleophile; for GATase activity in catalysis. In terms of domain architecture, Glutamine amidotransferase type-2 spans 2–217 (CGIVGFIGEQ…DKEIVIVMKE (216 aa)). 2 consecutive SIS domains span residues 283-422 (IRNA…AKGE) and 452-590 (LAKQ…VDKP). Residue Lys-595 is the For Fru-6P isomerization activity of the active site.

As to quaternary structure, homodimer.

The protein localises to the cytoplasm. The enzyme catalyses D-fructose 6-phosphate + L-glutamine = D-glucosamine 6-phosphate + L-glutamate. In terms of biological role, catalyzes the first step in hexosamine metabolism, converting fructose-6P into glucosamine-6P using glutamine as a nitrogen source. This Bacillus thuringiensis subsp. konkukian (strain 97-27) protein is Glutamine--fructose-6-phosphate aminotransferase [isomerizing].